Here is a 272-residue protein sequence, read N- to C-terminus: Tryptophan synthase alpha chain (272 aa).

Residues Glu49 and Glu60 each act as proton acceptor in the active site.

The protein belongs to the TrpA family. As to quaternary structure, tetramer of two alpha and two beta chains.

The catalysed reaction is (1S,2R)-1-C-(indol-3-yl)glycerol 3-phosphate + L-serine = D-glyceraldehyde 3-phosphate + L-tryptophan + H2O. The protein operates within amino-acid biosynthesis; L-tryptophan biosynthesis; L-tryptophan from chorismate: step 5/5. Functionally, the alpha subunit is responsible for the aldol cleavage of indoleglycerol phosphate to indole and glyceraldehyde 3-phosphate. The chain is Tryptophan synthase alpha chain from Legionella pneumophila (strain Lens).